A 247-amino-acid chain; its full sequence is 14-3-3-like protein B (247 aa).

Belongs to the 14-3-3 family.

The protein is 14-3-3-like protein B (GF14B) of Glycine max (Soybean).